Consider the following 56-residue polypeptide: Large ribosomal subunit protein eL37 (56 aa).

Residues Cys19, Cys22, Cys34, and Cys37 each contribute to the Zn(2+) site. Residues 19–37 (CRRCGSVSFNVHTKQCTSC) form a C4-type zinc finger.

Belongs to the eukaryotic ribosomal protein eL37 family. Zn(2+) serves as cofactor.

Functionally, binds to the 23S rRNA. In Methanosarcina acetivorans (strain ATCC 35395 / DSM 2834 / JCM 12185 / C2A), this protein is Large ribosomal subunit protein eL37 (rpl37e).